Consider the following 636-residue polypeptide: Threonine--tRNA ligase (636 aa).

A TGS domain is found at 1–61 (MPVITLPDGS…TQDVSLSIIT (61 aa)). A catalytic region spans residues 242-533 (DHRKLGKKFD…LIEEYEGAFP (292 aa)). The Zn(2+) site is built by cysteine 333, histidine 384, and histidine 510.

It belongs to the class-II aminoacyl-tRNA synthetase family. In terms of assembly, homodimer. Zn(2+) serves as cofactor.

It localises to the cytoplasm. It carries out the reaction tRNA(Thr) + L-threonine + ATP = L-threonyl-tRNA(Thr) + AMP + diphosphate + H(+). Catalyzes the attachment of threonine to tRNA(Thr) in a two-step reaction: L-threonine is first activated by ATP to form Thr-AMP and then transferred to the acceptor end of tRNA(Thr). Also edits incorrectly charged L-seryl-tRNA(Thr). This Saccharophagus degradans (strain 2-40 / ATCC 43961 / DSM 17024) protein is Threonine--tRNA ligase.